The chain runs to 323 residues: Low affinity immunoglobulin gamma Fc region receptor II-c (323 aa).

The signal sequence occupies residues 1–42; it reads MGILSFLPVLATESDWADCKSPQPWGHMLLWTAVLFLAPVAG. Residues 43–223 lie on the Extracellular side of the membrane; that stretch reads TPAAPPKAVL…VQAPSSSPMG (181 aa). 2 consecutive Ig-like C2-type domains span residues 48-127 and 131-213; these read PKAV…VHLT and EWLV…VTIT. 2 disulfides stabilise this stretch: Cys-71/Cys-113 and Cys-152/Cys-196. Asn-106, Asn-180, and Asn-187 each carry an N-linked (GlcNAc...) asparagine glycan. A helical membrane pass occupies residues 224–246; sequence IIVAVVTGIAVAAIVAAVVALIY. The Cytoplasmic segment spans residues 247-323; it reads CRKKRISANS…PPNDHVNSNN (77 aa). Residues 277–323 form a disordered region; it reads KRQPEETNNDYETADGGYMTLNPRAPTDDDKNIYLTLPPNDHVNSNN. Phosphotyrosine; by SRC-type Tyr-kinases occurs at positions 294 and 310.

In terms of processing, phosphorylated by SRC-type Tyr-kinases such as LYN, BLK, FYN and SYK. Isoform IIC1 is detected in monocytes, macrophages, polymorphonuclear cells and natural killer cells.

It is found in the cytoplasm. It localises to the cell membrane. Functionally, receptor for the Fc region of complexed immunoglobulins gamma. Low affinity receptor. Involved in a variety of effector and regulatory functions such as phagocytosis of immune complexes and modulation of antibody production by B-cells. This is Low affinity immunoglobulin gamma Fc region receptor II-c (FCGR2C) from Homo sapiens (Human).